The sequence spans 202 residues: FMN reductase (NADH) RutF 1 (202 aa).

Residues 168-202 (PRTPRSGSAPAEPARAPRAVGARPAEGPALALRSA) are disordered. Over residues 171-196 (PRSGSAPAEPARAPRAVGARPAEGPA) the composition is skewed to low complexity.

It belongs to the non-flavoprotein flavin reductase family. RutF subfamily.

It catalyses the reaction FMNH2 + NAD(+) = FMN + NADH + 2 H(+). Its function is as follows. Catalyzes the reduction of FMN to FMNH2 which is used to reduce pyrimidine by RutA via the Rut pathway. This is FMN reductase (NADH) RutF 1 from Methylorubrum extorquens (strain PA1) (Methylobacterium extorquens).